Reading from the N-terminus, the 259-residue chain is UPF0246 protein PputGB1_4560 (259 aa).

It belongs to the UPF0246 family.

In Pseudomonas putida (strain GB-1), this protein is UPF0246 protein PputGB1_4560.